A 116-amino-acid polypeptide reads, in one-letter code: Putative serine proteinase inhibitor 2 homolog first part (116 aa).

It belongs to the serpin family. Poxviruses subfamily.

This chain is Putative serine proteinase inhibitor 2 homolog first part, found in Vaccinia virus (strain Copenhagen) (VACV).